The primary structure comprises 332 residues: Putative pumilio homolog 20 (332 aa).

Positions 1 to 332 (MAHQLRFAAA…NIASILNSIR (332 aa)) constitute a PUM-HD domain. Pumilio repeat units follow at residues 89–124 (SDPDYFLMIARNMNGSKRIQKLLGKTDDVDALFAAA) and 125–159 (ILRRFLHIITDKYASYVVRRGMTVFDKKKKKAMYE). The stretch at 160-191 (HILHYASHIARDKHGNLALNDIITDAYRNKLF) is one Pumilio 3; degenerate repeat. 3 Pumilio repeats span residues 192 to 228 (DVIAHKALVLSNDAYGNFVIQRVLKLNDLRSKNNIVV), 229 to 266 (SLRGHFVDLSFQKYGSYVVDVLLETKESMVVVVEELME), and 267 to 303 (CEGDMLMRLARNEYGNFLVCKALRVTQKEMVRTDLFW).

It localises to the cytoplasm. Functionally, sequence-specific RNA-binding protein that regulates translation and mRNA stability by binding the 3'-UTR of target mRNAs. The chain is Putative pumilio homolog 20 (APUM20) from Arabidopsis thaliana (Mouse-ear cress).